A 599-amino-acid polypeptide reads, in one-letter code: Beta-(1--&gt;2)glucan export ATP-binding/permease protein NdvA (599 aa).

Residues 21 to 301 (TITMCVASVL…ISAFINQTVT (281 aa)) enclose the ABC transmembrane type-1 domain. 5 helical membrane passes run 22–42 (ITMC…PVLF), 55–75 (IFSP…AAVF), 156–176 (MRMS…GQLV), 248–268 (MAST…VTKG), and 276–296 (IAFI…SAFI). One can recognise an ABC transporter domain in the interval 335-569 (IVFDNVTYEF…GGRFSDLLRA (235 aa)). 368–375 (GPTGAGKT) contacts ATP.

Belongs to the ABC transporter superfamily. Beta-(1--&gt;2)glucan exporter (TC 3.A.1.108.1) family. Homodimer.

Its subcellular location is the cell inner membrane. The catalysed reaction is [(1-&gt;2)-beta-D-glucosyl](n)(in) + ATP + H2O = [(1-&gt;2)-beta-D-glucosyl](n)(out) + ADP + phosphate + H(+). Functionally, involved in beta-(1--&gt;2)glucan export. Its export to the periplasmic space is required to exert its action as a virulence factor. Transmembrane domains (TMD) form a pore in the inner membrane and the ATP-binding domain (NBD) is responsible for energy generation. The chain is Beta-(1--&gt;2)glucan export ATP-binding/permease protein NdvA from Brucella abortus (strain 2308).